The sequence spans 390 residues: Queuine tRNA-ribosyltransferase (390 aa).

The active-site Proton acceptor is Asp-92. Residues 92–96 (DSGGF), Asp-146, Gln-195, and Gly-222 each bind substrate. An RNA binding region spans residues 253 to 259 (GVGTPED). Asp-272 (nucleophile) is an active-site residue. Residues 277–281 (TRNAR) form an RNA binding; important for wobble base 34 recognition region. 4 residues coordinate Zn(2+): Cys-310, Cys-312, Cys-315, and His-354.

This sequence belongs to the queuine tRNA-ribosyltransferase family. Homodimer. Within each dimer, one monomer is responsible for RNA recognition and catalysis, while the other monomer binds to the replacement base PreQ1. Zn(2+) serves as cofactor.

It catalyses the reaction 7-aminomethyl-7-carbaguanine + guanosine(34) in tRNA = 7-aminomethyl-7-carbaguanosine(34) in tRNA + guanine. Its pathway is tRNA modification; tRNA-queuosine biosynthesis. Functionally, catalyzes the base-exchange of a guanine (G) residue with the queuine precursor 7-aminomethyl-7-deazaguanine (PreQ1) at position 34 (anticodon wobble position) in tRNAs with GU(N) anticodons (tRNA-Asp, -Asn, -His and -Tyr). Catalysis occurs through a double-displacement mechanism. The nucleophile active site attacks the C1' of nucleotide 34 to detach the guanine base from the RNA, forming a covalent enzyme-RNA intermediate. The proton acceptor active site deprotonates the incoming PreQ1, allowing a nucleophilic attack on the C1' of the ribose to form the product. After dissociation, two additional enzymatic reactions on the tRNA convert PreQ1 to queuine (Q), resulting in the hypermodified nucleoside queuosine (7-(((4,5-cis-dihydroxy-2-cyclopenten-1-yl)amino)methyl)-7-deazaguanosine). The chain is Queuine tRNA-ribosyltransferase from Delftia acidovorans (strain DSM 14801 / SPH-1).